The sequence spans 232 residues: BTB/POZ domain-containing protein KCTD11 (232 aa).

The BTB domain maps to methionine 1–arginine 49.

In terms of assembly, homopentamer. Interacts with KCTD6 and KCTD21; KCTD11 and KCTD6 or KCTD21 may associate in pentameric assemblies. Component of the BCR(KCTD11) E3 ubiquitin ligase complex, at least composed of CUL3 and KCTD11 and RBX1. Interacts (via BTB domain) with CUL3; initially a 4:4 stoichiometry has been reported, however, electron microscopy revealed pentameric states of the BTB domain. In terms of tissue distribution, higher expression in cerebellum than in whole brain and lower expression in medulloblastoma.

The protein operates within protein modification; protein ubiquitination. In terms of biological role, plays a role as a marker and a regulator of neuronal differentiation; Up-regulated by a variety of neurogenic signals, such as retinoic acid, epidermal growth factor/EGF and NGFB/nerve growth factor. Induces apoptosis, growth arrest and the expression of cyclin-dependent kinase inhibitor CDKN1B. Plays a role as a tumor repressor and inhibits cell growth and tumorigenicity of medulloblastoma (MDB). Acts as a probable substrate-specific adapter for a BCR (BTB-CUL3-RBX1) E3 ubiquitin-protein ligase complex towards HDAC1. Functions as antagonist of the Hedgehog pathway on cell proliferation and differentiation by affecting the nuclear transfer of transcription factor GLI1, thus maintaining cerebellar granule cells in undifferentiated state, this effect probably occurs via HDAC1 down-regulation, keeping GLI1 acetylated and inactive. When knock-down, Hedgehog antagonism is impaired and proliferation of granule cells is sustained. Activates the caspase cascade. In Homo sapiens (Human), this protein is BTB/POZ domain-containing protein KCTD11 (KCTD11).